The primary structure comprises 434 residues: Nicotinate phosphoribosyltransferase (434 aa).

His242 carries the phosphohistidine; by autocatalysis modification.

Belongs to the NAPRTase family. Transiently phosphorylated on a His residue during the reaction cycle. Phosphorylation strongly increases the affinity for substrates and increases the rate of nicotinate D-ribonucleotide production. Dephosphorylation regenerates the low-affinity form of the enzyme, leading to product release.

The catalysed reaction is nicotinate + 5-phospho-alpha-D-ribose 1-diphosphate + ATP + H2O = nicotinate beta-D-ribonucleotide + ADP + phosphate + diphosphate. The protein operates within cofactor biosynthesis; NAD(+) biosynthesis; nicotinate D-ribonucleotide from nicotinate: step 1/1. Its function is as follows. Catalyzes the synthesis of beta-nicotinate D-ribonucleotide from nicotinate and 5-phospho-D-ribose 1-phosphate at the expense of ATP. The polypeptide is Nicotinate phosphoribosyltransferase (Mesorhizobium japonicum (strain LMG 29417 / CECT 9101 / MAFF 303099) (Mesorhizobium loti (strain MAFF 303099))).